The chain runs to 204 residues: Probable carboxysome shell protein CsoS1E (204 aa).

Composition is skewed to low complexity over residues 1 to 14 (MPKP…DSPS), 41 to 84 (SAST…AAGS), and 92 to 102 (GGAIKPPASSS). Residues 1-102 (MPKPSSSSSS…GAIKPPASSS (102 aa)) form a disordered region. The region spanning 111 to 196 (ALGMIETRGM…PHQEVEPALR (86 aa)) is the BMC domain.

Belongs to the bacterial microcompartments protein family. As to quaternary structure, homohexamer.

Its subcellular location is the carboxysome. A probable carboxysomal shell protein found only in Prochlorococcus and Synechococcus strains that grow in low light. This is Probable carboxysome shell protein CsoS1E from Prochlorococcus marinus (strain MIT 9313).